The following is a 331-amino-acid chain: Glyceraldehyde-3-phosphate dehydrogenase 2 (331 aa).

Residues 11–12 (RI), D33, and R78 each bind NAD(+). D-glyceraldehyde 3-phosphate-binding positions include 148-150 (SCT), T179, 208-209 (TG), and R231. The Nucleophile role is filled by C149. N313 provides a ligand contact to NAD(+).

It belongs to the glyceraldehyde-3-phosphate dehydrogenase family. Homotetramer.

It is found in the cytoplasm. The enzyme catalyses D-glyceraldehyde 3-phosphate + phosphate + NAD(+) = (2R)-3-phospho-glyceroyl phosphate + NADH + H(+). It participates in carbohydrate degradation; glycolysis; pyruvate from D-glyceraldehyde 3-phosphate: step 1/5. The protein is Glyceraldehyde-3-phosphate dehydrogenase 2 (GAP2) of Kluyveromyces marxianus (Yeast).